A 315-amino-acid chain; its full sequence is Secreted mono- and diacylglycerol lipase LIP2 (315 aa).

Positions 1-21 (MACFRVILYLSVIFFVQCVFA) are cleaved as a signal peptide. An intrachain disulfide couples Cys68 to Cys308. Asn74 is a glycosylation site (N-linked (GlcNAc...) asparagine). The active-site Nucleophile is Ser182. The active site involves Asp240. Asn265 carries N-linked (GlcNAc...) asparagine glycosylation. His292 is an active-site residue.

It belongs to the AB hydrolase superfamily. Lipase family. Class 3 subfamily.

It is found in the secreted. It carries out the reaction a monoacylglycerol + H2O = glycerol + a fatty acid + H(+). The enzyme catalyses a diacylglycerol + H2O = a monoacylglycerol + a fatty acid + H(+). Its function is as follows. Secreted lipase involved in Dandruff and seborrheic dermatitis (D/SD) probably via lipase-mediated breakdown of sebaceous lipids and release of irritating free fatty acids. Shows activity against monoglyceride and diglyceride substrates and generates free oleic acid from the substrates mono- and diolein. Able to cleave the oleic acid from both the 1 and the 2 position of the glycerol backbone as 1,2 isomers of diolein were converted into oleic acid and glycerol. Due to an absence of fatty acid synthase genes in Malassezia species, secretory lipases are essential for the yeast to generate free fatty acids from degradation of sebum and assimilate them as lipid sources for growth. Plays an essential role at the pathogen-host interface during disease progression. Also performs the reverse reaction to build diacylglycerols from monoacylglycerols. In Malassezia restricta (Seborrheic dermatitis infection agent), this protein is Secreted mono- and diacylglycerol lipase LIP2.